The primary structure comprises 520 residues: Non-specific phospholipase C6 (520 aa).

A signal peptide spans 1 to 31 (MKPSSASRFSLTFSHFLTLYCLLTQTHVAQG).

Belongs to the bacterial phospholipase C family. As to expression, expressed in roots, leaves, stems, flowers and siliques.

Its subcellular location is the secreted. The chain is Non-specific phospholipase C6 (NPC6) from Arabidopsis thaliana (Mouse-ear cress).